The sequence spans 87 residues: U3-theraphotoxin-Cg1b (87 aa).

A signal peptide spans Met1–Ala23. The propeptide occupies Glu24–Arg48. 3 disulfide bridges follow: Cys52-Cys65, Cys56-Cys79, and Cys73-Cys84.

The protein belongs to the neurotoxin 12 (Hwtx-2) family. 03 (juruin) subfamily. Expressed by the venom gland.

It is found in the secreted. Its function is as follows. Probable ion channel inhibitor. In Chilobrachys guangxiensis (Chinese earth tiger tarantula), this protein is U3-theraphotoxin-Cg1b.